The following is a 370-amino-acid chain: Alpha-ketoglutarate-dependent xanthine dioxygenase xanA (370 aa).

Residue His-107 coordinates substrate. Fe cation-binding residues include His-149 and Asp-151. Residues Thr-195 and Trp-325 each coordinate 2-oxoglutarate. His-340 provides a ligand contact to Fe cation. A 2-oxoglutarate-binding site is contributed by Arg-352.

Belongs to the TfdA dioxygenase family. Fe(2+) serves as cofactor. Post-translationally, glycosylated. Is subject to both N- and O-linked glycosylation. Phosphorylated.

It is found in the cytoplasm. The protein resides in the cytosol. The enzyme catalyses xanthine + 2-oxoglutarate + O2 = urate + succinate + CO2. Cu(2+) and Zn(2+) completely inhibit the xanthine dioxygenase activity, whereas Co(2+), Mn(2+), and Ni(2+) partially inhibit the activity. The inactive metal ions are presumed to compete for the Fe(2+)-binding site. N-oxalylglycine (NOG), a known inhibitor of several Fe(2+)/alpha-ketoglutarate-dependent dioxygenase family members, competes with alpha-ketoglutarate and provides a Ki of 0.12 uM for inhibition. 6,8-dihydroxypurine acts as a slow-binding competitive inhibitor. The thiol-specific inhibitors 5,5'-dithiobis(2-nitrobenzoic acid) (DTNB) and iodoacetamide, inhibit also the catalytic activity. Functionally, alpha-ketoglutarate-dependent xanthine dioxygenase is a non-heme mononuclear Fe(2+) enzyme that decarboxylates alpha-ketoglutarate to succinate and CO(2) while hydroxylating xanthine to generate uric acid. Allows xanthine utilization as a nitrogen source. Whereas xanA is highly specific for xanthine, alpha-ketoadipic acid can replace alpha-ketoglutarate as a cosubstrate. Exhibits ferroxidase activity in the absence of substrates. The chain is Alpha-ketoglutarate-dependent xanthine dioxygenase xanA from Emericella nidulans (Aspergillus nidulans).